The sequence spans 162 residues: Transcription elongation factor GreA (162 aa).

Residues 50–75 (YHAAREEQGHLESRIRQLQELLRTAK) adopt a coiled-coil conformation.

This sequence belongs to the GreA/GreB family.

In terms of biological role, necessary for efficient RNA polymerase transcription elongation past template-encoded arresting sites. The arresting sites in DNA have the property of trapping a certain fraction of elongating RNA polymerases that pass through, resulting in locked ternary complexes. Cleavage of the nascent transcript by cleavage factors such as GreA or GreB allows the resumption of elongation from the new 3'terminus. GreA releases sequences of 2 to 3 nucleotides. In Saccharopolyspora erythraea (strain ATCC 11635 / DSM 40517 / JCM 4748 / NBRC 13426 / NCIMB 8594 / NRRL 2338), this protein is Transcription elongation factor GreA.